The following is a 395-amino-acid chain: Na(+)/H(+) antiporter NhaA (395 aa).

A run of 11 helical transmembrane segments spans residues 11-31 (FQLE…ALII), 61-81 (LLLW…GLEV), 96-116 (IVLP…IYWF), 127-147 (GWAI…ALLG), 156-176 (LFLM…IAIF), 179-199 (GELS…LVAM), 215-237 (LILW…TLAF), 262-282 (VAYG…LSGV), 295-315 (IAVG…WLAV), 334-354 (VAIL…LAFV), and 366-386 (MGIL…TAAA).

It belongs to the NhaA Na(+)/H(+) (TC 2.A.33) antiporter family.

Its subcellular location is the cell inner membrane. The enzyme catalyses Na(+)(in) + 2 H(+)(out) = Na(+)(out) + 2 H(+)(in). Its function is as follows. Na(+)/H(+) antiporter that extrudes sodium in exchange for external protons. This chain is Na(+)/H(+) antiporter NhaA, found in Pseudomonas fluorescens (strain Pf0-1).